The chain runs to 352 residues: Ketoisovalerate oxidoreductase subunit VorB (352 aa).

Heterotrimer of the VorA, VorB and VorC subunits.

The catalysed reaction is 3-methyl-2-oxobutanoate + 2 oxidized [2Fe-2S]-[ferredoxin] + CoA = 2-methylpropanoyl-CoA + 2 reduced [2Fe-2S]-[ferredoxin] + CO2 + H(+). This Methanothermobacter marburgensis (strain ATCC BAA-927 / DSM 2133 / JCM 14651 / NBRC 100331 / OCM 82 / Marburg) (Methanobacterium thermoautotrophicum) protein is Ketoisovalerate oxidoreductase subunit VorB (vorB).